The chain runs to 209 residues: MENLPKINHFRDLIKTLNIQIKNKQHGLISIEKQLSVAIDNVENLCLIRNKLKTDIENLLENKIDVENKLLVLRNQTEYIVSSTVKTVVKKFGVVPDINRLDQCIRYLIMTFHPILNPRKPTTDELIKLGPEKIILKAHEFYNNILVMNSGPHVFFHTHDNYQLCEWDGKSTKCKCGSTCVFWCIEECNLLTDISLSCKNPIGYAKCGF.

Positions 41–76 (NVENLCLIRNKLKTDIENLLENKIDVENKLLVLRNQ) form a coiled coil.

This is an uncharacterized protein from Acanthamoeba polyphaga (Amoeba).